The chain runs to 879 residues: MKKLTSSEFRQMFLDFFKDHGHMIMPSASLIPQDDPTLLWINSGVATMKKYFDGSVVPKNHRITSSQKSIRTNDIENVGKTARHQTFFEMLGNFSVGDYFRDEAIPWAWEFLTSPKWLGLPKEKLYCTVYPKDVDSQRVWEKAGMPADHIVKLEDNFWDIGEGPCGPDTEIFYDRGQENNDVAEDDPENFPGGENARYLEIWNIVFSQYNHLPNGKYVDQPHKNIDTGMGLERVLSILQDAPTNFETDLFLPIIHATEEMTDGKKYGENKEDTTAFKIIADHVRAVSFAIADGALPSNSGRGYVLRRLIRRADLHGQRLGIKGAFLYKLVPVVGKIMQSHYPEVMDQRGFIENVIQNEEKRFQATLDTGLTLLDDLIDKAKKSDDKTISGKDAFKMFDTYGFPYELTFESAQDAGLKVDKKGFDAEMQAQKERARKARGDLQSMGRQDVTLMNIKDKSVFERDTYEEPHAKLLDIVVDDKLVDKADGEHATLVFDKTPFYAERGGQVADHGNIYDQDGELVAKVTDVQHAPNNQNLHFVDLILPMEKGKEYVLKIDKERREGLRHSHSATHLLHAALRQVLGEHTHQAGSLVDPDYLRFDFTAMEPMTPREIKSVEELVNQKIWEAIDVKTTITTPEEGEKMGALALFDGKYGDKVRVVQMGDFSSEFCGGTHCSNTNQIGIFKIISESAVGAGMRRIEAVTSKKAYEYLANRSSLLDDIQADVKATKPDNIIDKIDSLESDLHDSQKQVEALTKQINQAKAGQIFDDVKQAGDLTVIATVADVNGMNDLRELADNWKSGNKSDVLVLAAENDGKANMIISLGQKALDKGLKAGDLIKKVAPIFGGGGGGRPNMAQAGGKRPEGLNDAIKAVIEEISKN.

Residues H567, H571, C669, and H673 each coordinate Zn(2+).

This sequence belongs to the class-II aminoacyl-tRNA synthetase family. Zn(2+) is required as a cofactor.

The protein localises to the cytoplasm. It carries out the reaction tRNA(Ala) + L-alanine + ATP = L-alanyl-tRNA(Ala) + AMP + diphosphate. Its function is as follows. Catalyzes the attachment of alanine to tRNA(Ala) in a two-step reaction: alanine is first activated by ATP to form Ala-AMP and then transferred to the acceptor end of tRNA(Ala). Also edits incorrectly charged Ser-tRNA(Ala) and Gly-tRNA(Ala) via its editing domain. This chain is Alanine--tRNA ligase, found in Lactobacillus helveticus (strain DPC 4571).